Consider the following 407-residue polypeptide: Putative mannan endo-1,4-beta-mannosidase 9 (407 aa).

Positions 1–31 (MGSKRRVILLPTLGVVVLAIAAAVLLHAGEA) are cleaved as a signal peptide. Substrate-binding residues include Trp-95 and Asn-208. Glu-209 serves as the catalytic Proton donor. Tyr-284 serves as a coordination point for substrate. Catalysis depends on Glu-324, which acts as the Nucleophile. Trp-366 contributes to the substrate binding site.

This sequence belongs to the glycosyl hydrolase 5 (cellulase A) family. Expression not detected.

The protein resides in the secreted. The enzyme catalyses Random hydrolysis of (1-&gt;4)-beta-D-mannosidic linkages in mannans, galactomannans and glucomannans.. This Oryza sativa subsp. japonica (Rice) protein is Putative mannan endo-1,4-beta-mannosidase 9 (MAN9).